Reading from the N-terminus, the 346-residue chain is Uroporphyrinogen decarboxylase (346 aa).

Residues 21 to 25 (RQAGR), Asp-71, Tyr-146, Ser-201, and His-316 contribute to the substrate site.

This sequence belongs to the uroporphyrinogen decarboxylase family. In terms of assembly, homodimer.

The protein localises to the cytoplasm. It carries out the reaction uroporphyrinogen III + 4 H(+) = coproporphyrinogen III + 4 CO2. The protein operates within porphyrin-containing compound metabolism; protoporphyrin-IX biosynthesis; coproporphyrinogen-III from 5-aminolevulinate: step 4/4. Catalyzes the decarboxylation of four acetate groups of uroporphyrinogen-III to yield coproporphyrinogen-III. This chain is Uroporphyrinogen decarboxylase, found in Rickettsia africae (strain ESF-5).